The primary structure comprises 347 residues: UPF0283 membrane protein ECA1987 (347 aa).

Residues 1 to 11 (MNEPLKPRVTF) are compositionally biased toward basic and acidic residues. The tract at residues 1 to 48 (MNEPLKPRVTFDDVSPQEPQPQLRAGLAFDEQSSTPFSPISREEEVPE) is disordered. The next 3 helical transmembrane spans lie at 70–90 (MVMAGVALFGISALAQGVQSL), 99–119 (WIALGGITAGSLIVAAGVGSL), and 213–233 (ESTLMIAVSPLALVDMAFIAW).

It belongs to the UPF0283 family.

The protein localises to the cell inner membrane. The polypeptide is UPF0283 membrane protein ECA1987 (Pectobacterium atrosepticum (strain SCRI 1043 / ATCC BAA-672) (Erwinia carotovora subsp. atroseptica)).